A 100-amino-acid chain; its full sequence is Small ribosomal subunit protein uS14c (100 aa).

Residues 1–31 form a disordered region; sequence MARKSLIQREKKRQKLEQKYHSIRRSSKKEI.

Belongs to the universal ribosomal protein uS14 family. Part of the 30S ribosomal subunit.

The protein resides in the plastid. It localises to the chloroplast. Its function is as follows. Binds 16S rRNA, required for the assembly of 30S particles. In Nicotiana tomentosiformis (Tobacco), this protein is Small ribosomal subunit protein uS14c.